A 474-amino-acid chain; its full sequence is MSTSELVFIPSPGAGHLPPTVELAKLLLHRDQRLSVTIIVMNLWLGPKHNTEARPCVPSLRFVDIPCDESTMALISPNTFISAFVEHHKPRVRDIVRGIIESDSVRLAGFVLDMFCMPMSDVANEFGVPSYNYFTSGAATLGLMFHLQWKRDHEGYDATELKNSDTELSVPSYVNPVPAKVLPEVVLDKEGGSKMFLDLAERIRESKGIIVNSCQAIERHALEYLSSNNNGIPPVFPVGPILNLENKKDDAKTDEIMRWLNEQPESSVVFLCFGSMGSFNEKQVKEIAVAIERSGHRFLWSLRRPTPKEKIEFPKEYENLEEVLPEGFLKRTSSIGKVIGWAPQMAVLSHPSVGGFVSHCGWNSTLESMWCGVPMAAWPLYAEQTLNAFLLVVELGLAAEIRMDYRTDTKAGYDGGMEVTVEEIEDGIRKLMSDGEIRNKVKDVKEKSRAAVVEGGSSYASIGKFIEHVSNVTI.

Residues serine 275, 341–342 (WA), 359–367 (HCGWNSTLE), and 381–384 (YAEQ) contribute to the UDP-alpha-D-glucose site.

This sequence belongs to the UDP-glycosyltransferase family.

Its function is as follows. May glycosylate diterpenes or flavonols in leaves. The protein is UDP-glycosyltransferase 71E1 of Stevia rebaudiana (Stevia).